The following is a 278-amino-acid chain: MITGRTALYGVVGHPVAHSRSPEMQNAAFAKLGVDAAYVALPVAPERIDEALRGAHALGFQGLNVTVPHKPRAASLCHALDPVATAVGAANTLRRTRDGWEGFNTDAPACRTLLEAAGVARGARALLVGAGGAARAAAWALLQLGTELRVAARREEAAAELCRDLAAAVPGADAATADFEDLEAEADAAAVVVNGTSVELPGHEGRLPPLRFRADQVVLDFVYGDTELARAARAGGARLVTGEQVLVRQGALAFTIWTGLPAPEADMARALEAREGAR.

Residues 19-21 (SRS) and threonine 66 contribute to the shikimate site. Residue lysine 70 is the Proton acceptor of the active site. Residues asparagine 91 and aspartate 106 each coordinate shikimate. Residues 129–133 (GAGGA) and phenylalanine 221 contribute to the NADP(+) site. Tyrosine 223 provides a ligand contact to shikimate. Residue glycine 242 coordinates NADP(+).

It belongs to the shikimate dehydrogenase family. In terms of assembly, homodimer.

It catalyses the reaction shikimate + NADP(+) = 3-dehydroshikimate + NADPH + H(+). It participates in metabolic intermediate biosynthesis; chorismate biosynthesis; chorismate from D-erythrose 4-phosphate and phosphoenolpyruvate: step 4/7. Functionally, involved in the biosynthesis of the chorismate, which leads to the biosynthesis of aromatic amino acids. Catalyzes the reversible NADPH linked reduction of 3-dehydroshikimate (DHSA) to yield shikimate (SA). The sequence is that of Shikimate dehydrogenase (NADP(+)) from Anaeromyxobacter dehalogenans (strain 2CP-C).